Reading from the N-terminus, the 935-residue chain is uncharacterized protein (935 aa).

Disordered regions lie at residues 1–32, 74–228, 265–287, 342–376, 394–414, 466–491, 516–559, 727–755, and 778–799; these read MDIG…QNNN, NNNN…YNNG, NNEN…NNNN, NQQK…SSKT, SPTQ…QQQY, KNIN…NNNI, PHQQ…TSTI, SPSS…ISPS, and GGGS…NVQN. The segment covering 74 to 227 has biased composition (low complexity); that stretch reads NNNNNTTNNN…NNNDDNIYNN (154 aa). Residues 262-331 adopt a coiled-coil conformation; it reads KKNNNENKKK…NNINNNNNKI (70 aa). The segment covering 265-274 has biased composition (basic and acidic residues); it reads NNENKKKNND. The span at 275-287 shows a compositional bias: low complexity; sequence NENNNYPNFNNNN. The span at 367-376 shows a compositional bias: polar residues; that stretch reads LSHNSESSKT. The span at 397–414 shows a compositional bias: low complexity; that stretch reads QQQQQQQQQQQQQQQQQY. The segment covering 522–559 has biased composition (low complexity); it reads SSPTSSSTSTSSTTSSSSSSSSSSSSSSSSSTSSTSTI. Gly residues predominate over residues 778–791; it reads GGGSSGGGGSGGGV.

This is an uncharacterized protein from Dictyostelium discoideum (Social amoeba).